Here is a 504-residue protein sequence, read N- to C-terminus: Activin receptor type-1-like (504 aa).

The signal sequence occupies residues 1–20; it reads MTLGIFRRVFLMLSVALGLT. Over 21–121 the chain is Extracellular; it reads KGDLVKPSRG…EEPEVDAHLP (101 aa). N-linked (GlcNAc...) asparagine glycosylation is present at N34. 3 disulfide bridges follow: C35–C52, C37–C42, and C47–C70. A mediates specificity for BMP ligand region spans residues 74–77; sequence NQEL. Disulfide bonds link C78/C90 and C91/C96. A glycan (N-linked (GlcNAc...) asparagine) is linked at N99. A helical transmembrane segment spans residues 122–142; that stretch reads LILGPVLALLVLVALGTLGLW. Residues 143 to 504 lie on the Cytoplasmic side of the membrane; it reads RVRRRQEKQR…QNPEKPKVIH (362 aa). Phosphoserine occurs at positions 156, 161, and 162. Positions 173–202 constitute a GS domain; it reads SMLGDFLVSDCTTGSGSGLPFLVQRTVARQ. In terms of domain architecture, Protein kinase spans 203–504; it reads VALVECVGKG…QNPEKPKVIH (302 aa). ATP is bound by residues 209–217 and K230; that span reads VGKGRYGEV. D331 functions as the Proton acceptor in the catalytic mechanism.

The protein belongs to the protein kinase superfamily. TKL Ser/Thr protein kinase family. TGFB receptor subfamily. As to quaternary structure, interacts with TSC22D1/TSC-22. Mg(2+) is required as a cofactor. Requires Mn(2+) as cofactor. Urogenital ridge, testis, ovary, brain and lung. In lung, found exclusively in pulmonary vessels of all sizes. Also expressed in aorta, vena cava and certain blood vessels of kidney, spleen, heart and intestine. For most blood vessels, a higher level of expression is found in endothelium than in adjacent smooth muscle.

It localises to the cell membrane. The enzyme catalyses L-threonyl-[receptor-protein] + ATP = O-phospho-L-threonyl-[receptor-protein] + ADP + H(+). It catalyses the reaction L-seryl-[receptor-protein] + ATP = O-phospho-L-seryl-[receptor-protein] + ADP + H(+). Its function is as follows. Type I receptor for TGF-beta family ligands BMP9/GDF2 and BMP10 and important regulator of normal blood vessel development. On ligand binding, forms a receptor complex consisting of two type II and two type I transmembrane serine/threonine kinases. Type II receptors phosphorylate and activate type I receptors which autophosphorylate, then bind and activate SMAD transcriptional regulators. May bind activin as well. The polypeptide is Activin receptor type-1-like (Acvrl1) (Rattus norvegicus (Rat)).